A 238-amino-acid polypeptide reads, in one-letter code: Ubiquinone biosynthesis O-methyltransferase (238 aa).

R39, G58, D79, and M123 together coordinate S-adenosyl-L-methionine.

The protein belongs to the methyltransferase superfamily. UbiG/COQ3 family.

The enzyme catalyses a 3-demethylubiquinol + S-adenosyl-L-methionine = a ubiquinol + S-adenosyl-L-homocysteine + H(+). It carries out the reaction a 3-(all-trans-polyprenyl)benzene-1,2-diol + S-adenosyl-L-methionine = a 2-methoxy-6-(all-trans-polyprenyl)phenol + S-adenosyl-L-homocysteine + H(+). Its pathway is cofactor biosynthesis; ubiquinone biosynthesis. In terms of biological role, O-methyltransferase that catalyzes the 2 O-methylation steps in the ubiquinone biosynthetic pathway. The sequence is that of Ubiquinone biosynthesis O-methyltransferase from Hahella chejuensis (strain KCTC 2396).